The sequence spans 232 residues: Adenosylcobinamide-GDP ribazoletransferase (232 aa).

A run of 6 helical transmembrane segments spans residues 31–51 (LPSF…LGAL), 59–79 (VFFL…GFLD), 102–122 (VGPF…NLYL), 126–146 (PFYF…LMAF), 167–187 (LLIS…YIIS), and 209–229 (VTGD…LLIL).

The protein belongs to the CobS family. It depends on Mg(2+) as a cofactor.

The protein resides in the cell inner membrane. The enzyme catalyses alpha-ribazole + adenosylcob(III)inamide-GDP = adenosylcob(III)alamin + GMP + H(+). It catalyses the reaction alpha-ribazole 5'-phosphate + adenosylcob(III)inamide-GDP = adenosylcob(III)alamin 5'-phosphate + GMP + H(+). It participates in cofactor biosynthesis; adenosylcobalamin biosynthesis; adenosylcobalamin from cob(II)yrinate a,c-diamide: step 7/7. Joins adenosylcobinamide-GDP and alpha-ribazole to generate adenosylcobalamin (Ado-cobalamin). Also synthesizes adenosylcobalamin 5'-phosphate from adenosylcobinamide-GDP and alpha-ribazole 5'-phosphate. The protein is Adenosylcobinamide-GDP ribazoletransferase of Thermosipho africanus (strain TCF52B).